A 428-amino-acid chain; its full sequence is AP-1 complex subunit mu (428 aa).

N-acetylalanine; partial is present on Ala2. An MHD domain is found at Lys169–Arg426.

It belongs to the adaptor complexes medium subunit family. In terms of assembly, adaptor protein complex 1 (AP-1) is a heterotetramer composed of two large adaptins (gamma-type subunit and beta-type subunit), a medium adaptin (mu-type subunit) and a small adaptin (sigma-type subunit).

It is found in the golgi apparatus. The protein resides in the trans-Golgi network. It localises to the cytoplasmic vesicle. Its subcellular location is the clathrin-coated vesicle membrane. Functionally, subunit of clathrin-associated adaptor protein complex 1 that plays a role in protein sorting in the trans-Golgi network (TGN) and endosomes. The AP complexes mediate the recruitment of clathrin to membranes and the recognition of sorting signals within the cytosolic tails of transmembrane cargo molecules. Also involved in early steps of phagocytosis and macropinocytosis. The sequence is that of AP-1 complex subunit mu (apm1) from Dictyostelium discoideum (Social amoeba).